The sequence spans 448 residues: Asparagine--tRNA ligase (448 aa).

Belongs to the class-II aminoacyl-tRNA synthetase family. Homodimer.

It is found in the cytoplasm. It catalyses the reaction tRNA(Asn) + L-asparagine + ATP = L-asparaginyl-tRNA(Asn) + AMP + diphosphate + H(+). The protein is Asparagine--tRNA ligase of Streptococcus pyogenes serotype M2 (strain MGAS10270).